We begin with the raw amino-acid sequence, 239 residues long: tRNA (guanine-N(1)-)-methyltransferase (239 aa).

S-adenosyl-L-methionine is bound by residues Gly108 and 127-132 (LGDYVL).

This sequence belongs to the RNA methyltransferase TrmD family. Homodimer.

It is found in the cytoplasm. The enzyme catalyses guanosine(37) in tRNA + S-adenosyl-L-methionine = N(1)-methylguanosine(37) in tRNA + S-adenosyl-L-homocysteine + H(+). Functionally, specifically methylates guanosine-37 in various tRNAs. This Streptococcus pneumoniae serotype 2 (strain D39 / NCTC 7466) protein is tRNA (guanine-N(1)-)-methyltransferase.